Consider the following 143-residue polypeptide: Peptide methionine sulfoxide reductase MsrB (143 aa).

The region spanning 16–139 (DAELRRRLTP…NSAALNFESR (124 aa)) is the MsrB domain. Residues C55, C58, C104, and C107 each coordinate Zn(2+). The Nucleophile role is filled by C128.

Belongs to the MsrB Met sulfoxide reductase family. The cofactor is Zn(2+).

The catalysed reaction is L-methionyl-[protein] + [thioredoxin]-disulfide + H2O = L-methionyl-(R)-S-oxide-[protein] + [thioredoxin]-dithiol. The polypeptide is Peptide methionine sulfoxide reductase MsrB (Burkholderia vietnamiensis (strain G4 / LMG 22486) (Burkholderia cepacia (strain R1808))).